Here is a 701-residue protein sequence, read N- to C-terminus: Elongation factor G (701 aa).

Residues 8-286 form the tr-type G domain; the sequence is ERIRNIGIIA…AIVHYLPSPV (279 aa). GTP-binding positions include 17-24, 85-89, and 139-142; these read AHIDAGKT, DTPGH, and NKMD.

Belongs to the TRAFAC class translation factor GTPase superfamily. Classic translation factor GTPase family. EF-G/EF-2 subfamily.

The protein localises to the cytoplasm. Functionally, catalyzes the GTP-dependent ribosomal translocation step during translation elongation. During this step, the ribosome changes from the pre-translocational (PRE) to the post-translocational (POST) state as the newly formed A-site-bound peptidyl-tRNA and P-site-bound deacylated tRNA move to the P and E sites, respectively. Catalyzes the coordinated movement of the two tRNA molecules, the mRNA and conformational changes in the ribosome. This chain is Elongation factor G, found in Roseiflexus sp. (strain RS-1).